The following is a 228-amino-acid chain: MNNGILLNCQNLTKDYIEGSVTTRVLKDVTFSMNDKELVAIVGSSGSGKSTLLHTLGGLDQPTSGEVFIKGKSLQKASQDELAKLRNTYLGFVYQFHHLMADFTALENVLMPMLIGNQNKTEAKDRAEKMLNAVGLSHRITHKPSALSGGERQRVAIARALVNNPALVLADEPTGNLDHKTTESIFELIQQLNEDQGIAFLLVTHDLNLAEKLNRRLIMQDGVLRPEM.

One can recognise an ABC transporter domain in the interval 7-228 (LNCQNLTKDY…MQDGVLRPEM (222 aa)). Residue 43-50 (GSSGSGKS) coordinates ATP.

Belongs to the ABC transporter superfamily. Lipoprotein translocase (TC 3.A.1.125) family. As to quaternary structure, the complex is composed of two ATP-binding proteins (LolD) and two transmembrane proteins (LolC and LolE).

Its subcellular location is the cell inner membrane. Its function is as follows. Part of the ABC transporter complex LolCDE involved in the translocation of mature outer membrane-directed lipoproteins, from the inner membrane to the periplasmic chaperone, LolA. Responsible for the formation of the LolA-lipoprotein complex in an ATP-dependent manner. The sequence is that of Lipoprotein-releasing system ATP-binding protein LolD from Mannheimia succiniciproducens (strain KCTC 0769BP / MBEL55E).